A 99-amino-acid chain; its full sequence is Plastocyanin B'/B'' (99 aa).

Residues 1 to 99 form the Plastocyanin-like domain; the sequence is IEVLLGSDDG…AGMVGKVTVN (99 aa). Residues His-37, Cys-84, His-87, and Met-92 each contribute to the Cu cation site.

Belongs to the plastocyanin family. Requires Cu(2+) as cofactor.

The protein localises to the plastid. The protein resides in the chloroplast thylakoid membrane. Functionally, participates in electron transfer between P700 and the cytochrome b6-f complex in photosystem I. This Nicotiana tabacum (Common tobacco) protein is Plastocyanin B'/B''.